The sequence spans 438 residues: Aspartate--tRNA(Asp) ligase (438 aa).

Position 170 (E170) interacts with L-aspartate. Positions 192–195 (QLYK) are aspartate. R214 provides a ligand contact to L-aspartate. Residues 214–216 (RAE), 222–224 (RHL), and E361 contribute to the ATP site. Mg(2+)-binding residues include E361 and S364. 2 residues coordinate L-aspartate: S364 and R368. 409-412 (GAER) contacts ATP.

The protein belongs to the class-II aminoacyl-tRNA synthetase family. Type 2 subfamily. Homodimer. Requires Mg(2+) as cofactor.

It localises to the cytoplasm. The enzyme catalyses tRNA(Asp) + L-aspartate + ATP = L-aspartyl-tRNA(Asp) + AMP + diphosphate. In terms of biological role, catalyzes the attachment of L-aspartate to tRNA(Asp) in a two-step reaction: L-aspartate is first activated by ATP to form Asp-AMP and then transferred to the acceptor end of tRNA(Asp). Is specific for tRNA(Asp) since it aspartylates tRNA(Asn) 3 orders of magnitude less efficiently than tRNA(Asp). This is Aspartate--tRNA(Asp) ligase from Thermococcus kodakarensis (strain ATCC BAA-918 / JCM 12380 / KOD1) (Pyrococcus kodakaraensis (strain KOD1)).